Here is a 703-residue protein sequence, read N- to C-terminus: DNA ligase (703 aa).

The interval 1-20 is disordered; that stretch reads MNDNLDLFSGAAPAAPESGA. Residues 9 to 20 are compositionally biased toward low complexity; it reads SGAAPAAPESGA. Residues 53–57, 102–103, and Glu-139 each bind NAD(+); these read DGEYD and SI. Lys-141 functions as the N6-AMP-lysine intermediate in the catalytic mechanism. Positions 162, 200, 321, and 345 each coordinate NAD(+). Cys-439, Cys-442, Cys-457, and Cys-463 together coordinate Zn(2+). Residues 622–703 form the BRCT domain; that stretch reads QTAQPLAGMT…MLALLAGGDR (82 aa).

It belongs to the NAD-dependent DNA ligase family. LigA subfamily. The cofactor is Mg(2+). Mn(2+) is required as a cofactor.

The catalysed reaction is NAD(+) + (deoxyribonucleotide)n-3'-hydroxyl + 5'-phospho-(deoxyribonucleotide)m = (deoxyribonucleotide)n+m + AMP + beta-nicotinamide D-nucleotide.. DNA ligase that catalyzes the formation of phosphodiester linkages between 5'-phosphoryl and 3'-hydroxyl groups in double-stranded DNA using NAD as a coenzyme and as the energy source for the reaction. It is essential for DNA replication and repair of damaged DNA. The chain is DNA ligase from Delftia acidovorans (strain DSM 14801 / SPH-1).